Here is a 425-residue protein sequence, read N- to C-terminus: Monoacylglycerol lipase ABHD2 (425 aa).

Topologically, residues methionine 1 to glutamate 9 are cytoplasmic. The chain crosses the membrane as a helical; Signal-anchor for type II membrane protein span at residues leucine 10–valine 30. The Extracellular portion of the chain corresponds to arginine 31–glutamate 425. The AB hydrolase-1 domain maps to methionine 128–glycine 382. Asparagine 136 carries an N-linked (GlcNAc...) asparagine glycan. The Nucleophile role is filled by serine 207. Catalysis depends on charge relay system residues aspartate 345 and histidine 376. Asparagine 410 carries N-linked (GlcNAc...) asparagine glycosylation.

The protein belongs to the AB hydrolase superfamily. AB hydrolase 4 family.

The protein resides in the cell membrane. The enzyme catalyses Hydrolyzes glycerol monoesters of long-chain fatty acids.. The catalysed reaction is an acetyl ester + H2O = an aliphatic alcohol + acetate + H(+). It carries out the reaction a triacylglycerol + H2O = a diacylglycerol + a fatty acid + H(+). It catalyses the reaction 2-(5Z,8Z,11Z,14Z-eicosatetraenoyl)-glycerol + H2O = glycerol + (5Z,8Z,11Z,14Z)-eicosatetraenoate + H(+). The enzyme catalyses a butanoate ester + H2O = an aliphatic alcohol + butanoate + H(+). The catalysed reaction is hexadecanoate ester + H2O = an aliphatic alcohol + hexadecanoate + H(+). Acylglycerol lipase activity is activated upon binding to progesterone. Progesterone-dependent acylglycerol lipase that catalyzes hydrolysis of endocannabinoid arachidonoylglycerol (AG) from cell membrane. Acts as a progesterone receptor: progesterone-binding activates the acylglycerol lipase activity, mediating degradation of 1-arachidonoylglycerol (1AG) and 2-arachidonoylglycerol (2AG) to glycerol and arachidonic acid (AA). Also displays an ester hydrolase activity against acetyl ester, butanoate ester and hexadecanoate ester. Plays a key role in sperm capacitation in response to progesterone by mediating degradation of 2AG, an inhibitor of the sperm calcium channel CatSper, leading to calcium influx via CatSper and sperm activation. May also play a role in smooth muscle cells migration. The polypeptide is Monoacylglycerol lipase ABHD2 (ABHD2) (Macaca fascicularis (Crab-eating macaque)).